A 303-amino-acid chain; its full sequence is Probable WRKY transcription factor 30 (303 aa).

The tract at residues 65–92 is disordered; it reads DQVSQGGGSPKSDDSDQEPLVIKSSKKS. A DNA-binding region (WRKY) is located at residues 107–175; the sequence is GVDRTLDDGF…YRGIHSCSQA (69 aa). The segment covering 266–278 has biased composition (low complexity); that stretch reads SGSASHSASNSPS. Residues 266-291 are disordered; that stretch reads SGSASHSASNSPSTVPLESPFESYDP.

This sequence belongs to the WRKY group III family. Interacts with WRKY53, WRKY54 and WRKY70.

The protein resides in the nucleus. Functionally, transcription factor. Interacts specifically with the W box (5'-(T)TGAC[CT]-3'), a frequently occurring elicitor-responsive cis-acting element. The protein is Probable WRKY transcription factor 30 of Arabidopsis thaliana (Mouse-ear cress).